A 598-amino-acid chain; its full sequence is Arginine--tRNA ligase (598 aa).

The short motif at 131-141 (ANPTGPMHVGH) is the 'HIGH' region element. The disordered stretch occupies residues 288–309 (KLPPPKSKKGQPPPQAQPDEEG).

The protein belongs to the class-I aminoacyl-tRNA synthetase family. In terms of assembly, monomer.

Its subcellular location is the cytoplasm. The enzyme catalyses tRNA(Arg) + L-arginine + ATP = L-arginyl-tRNA(Arg) + AMP + diphosphate. In Anaeromyxobacter dehalogenans (strain 2CP-C), this protein is Arginine--tRNA ligase.